Here is a 380-residue protein sequence, read N- to C-terminus: DNA replication and repair protein RecF (380 aa).

30–37 (GQNGQGKT) is an ATP binding site.

It belongs to the RecF family.

The protein localises to the cytoplasm. Its function is as follows. The RecF protein is involved in DNA metabolism; it is required for DNA replication and normal SOS inducibility. RecF binds preferentially to single-stranded, linear DNA. It also seems to bind ATP. In Myxococcus xanthus (strain DK1622), this protein is DNA replication and repair protein RecF.